A 66-amino-acid polypeptide reads, in one-letter code: Large ribosomal subunit protein bL32 (66 aa).

Belongs to the bacterial ribosomal protein bL32 family.

The polypeptide is Large ribosomal subunit protein bL32 (Rickettsia canadensis (strain McKiel)).